We begin with the raw amino-acid sequence, 397 residues long: MSLESELQKELSSRKAINRYRSRRVALSPSGVRMRVEGETKELIAFCSNDYLGLAQHPKVIEAFTQAARHYGVGSGASHLVNGHSQEHHQLEEELAAFTGRPRALLFSTGYMANMGVINGLLGRGDAVFQDKLNHASLLDGGLISGAKFHRFRHNDCEHLNTQLEKSTAARKLIVVDGVFSMDGDAANLNQLAASAKKHNAWLMVDDAHGFGCMGENGKGVVDACGLTLDDVPILMGTLGKAFGTFGAFVAGSETLIEALIQLARTYVYTTALPPAVAAATRASLHLLETEHWRREKLNALIQQFRGGCEALNLQLMPSQSPIQPIVLGEDAVALNVSKKMAERGFWITAIRPPTVPEGTARLRITLSAEHSEQDVEQLLNALAEVMREVSGELQSE.

Arginine 21 serves as a coordination point for substrate. 110-111 serves as a coordination point for pyridoxal 5'-phosphate; sequence GY. Histidine 135 contributes to the substrate binding site. Positions 181, 209, and 238 each coordinate pyridoxal 5'-phosphate. Lysine 241 carries the N6-(pyridoxal phosphate)lysine modification. Residue threonine 355 coordinates substrate.

This sequence belongs to the class-II pyridoxal-phosphate-dependent aminotransferase family. BioF subfamily. As to quaternary structure, homodimer. The cofactor is pyridoxal 5'-phosphate.

It catalyses the reaction 6-carboxyhexanoyl-[ACP] + L-alanine + H(+) = (8S)-8-amino-7-oxononanoate + holo-[ACP] + CO2. It functions in the pathway cofactor biosynthesis; biotin biosynthesis. Catalyzes the decarboxylative condensation of pimeloyl-[acyl-carrier protein] and L-alanine to produce 8-amino-7-oxononanoate (AON), [acyl-carrier protein], and carbon dioxide. This chain is 8-amino-7-oxononanoate synthase, found in Saccharophagus degradans (strain 2-40 / ATCC 43961 / DSM 17024).